Reading from the N-terminus, the 393-residue chain is MTNSNRIKLTWISFLSYALTGALVIVTGMVMGNIADYFNLPVSSMSNTFTFLNAGILISIFLNAWLMEIVPLKTQLRFGFLLMVLAVAGLMFSHSLALFSAAMFILGVVSGITMSIGTFLITQMYEGRQRGSRLLFTDSFFSMAGMIFPMIAAFLLARSIEWYWVYACIGLVYVAIFILTFGCEFPALGKHAPKTDAPVAKEKWGIGVLFLSVAALCYILGQLGFISWVPEYAKGLGMSLNDAGTLVSNFWMSYMVGMWAFSFILRFFDLQRILTVLAGLAAILMYVFNTGTPAHMAWSILTLGFFSSAIYTTIITLGSQQTKVPSPKLVNFVLTCGTIGTMLTFVVTGPIVEHSGPQAALLTANGLYAVVFVMCFLLGFVSRHRQHNTLTSH.

A run of 12 helical transmembrane segments spans residues 11–31, 51–71, 78–98, 101–121, 134–154, 162–182, 206–226, 245–265, 273–293, 297–317, 332–352, and 361–381; these read WISF…GMVM, FLNA…EIVP, FGFL…SLAL, AAMF…TFLI, LLFT…IAAF, WYWV…LTFG, IGVL…LGFI, TLVS…SFIL, ILTV…TGTP, AWSI…IITL, FVLT…GPIV, and LLTA…LGFV.

The protein belongs to the major facilitator superfamily. TsgA family.

The protein localises to the cell inner membrane. The sequence is that of Protein TsgA from Shigella dysenteriae serotype 1 (strain Sd197).